The sequence spans 687 residues: MLASNSDGASTSVKPSDDAVNTVTPWSILLTNNKPMSGSENTLNNESHEMSQILKKSGLCYDPRMRFHATLSEVDDHPEDPRRVLRVFEAIKKAGYVSNVPSPSDVFLRIPAREATLEELLQVHSQEMYDRVTNTEKMSHEDLANLEKISDSLYYNNESAFCARLACGSAIETCTAVVTGQVKNAFAVVRPPGHHAEPHKPGGFCLFNNVSVTARSMLQRFPDKIKRVLIVDWDIHHGNGTQMAFYDDPNVLYVSLHRYENGRFYPGTNYGCAENCGEGPGLGRTVNIPWSCAGMGDGDYIYAFQRVVMPVAYEFDPDLVIVSCGFDAAAGDHIGQFLLTPAAYAHMTQMLMGLADGKVFISLEGGYNLDSISTSALAVAQSLLGIPPGRLHTTYACPQAVATINHVTKIQSQYWRCMRPKHFDANPKDAHVDRLHDVIRTYQAKKLFEDWKITNMPILRDSVSNVFNNQVLCSSNFFQKDNLLVIVHESPRVLGNGTSETNVLNLNDSLLVDPVSLYVEWAMQQDWGLIDINIPEVVTDGENAPVDILSEVKELCLYVWDNYVELSISKNIFFIGGGKAVHGLVNLASSRNVSDRVKCMVNFLGTEPLVGLKTASEEDLPTWYYRHSLVFVSSSNECWKKAKRAKRRYGRLMQSEHTETSDMMEQHYRAVTQYLLHLLQKARPTSQ.

The interval 55 to 385 (KKSGLCYDPR…ALAVAQSLLG (331 aa)) is histone deacetylase. Residue His195 is part of the active site.

This sequence belongs to the histone deacetylase family. HD type 2 subfamily. In terms of assembly, interacts with ccq1, clr1, clr2 and mit1.

It localises to the nucleus. It is found in the chromosome. Its subcellular location is the centromere. The protein resides in the telomere. It catalyses the reaction N(6)-acetyl-L-lysyl-[histone] + H2O = L-lysyl-[histone] + acetate. Functionally, responsible for the deacetylation of lysine residues on the N-terminal part of the core histones (H2A, H2B, H3 and H4). Histone deacetylation gives a tag for epigenetic repression and plays an important role in transcriptional regulation, cell cycle progression and developmental events. Histone deacetylases act via the formation of large multiprotein complexes. Required for proper positioning of nucleosomes at heterochromatic loci and for transcriptional gene silencing (TGS) function of the Snf2/Hdac-containing repressor complex (SHREC). The polypeptide is Histone deacetylase clr3 (clr3) (Schizosaccharomyces pombe (strain 972 / ATCC 24843) (Fission yeast)).